Reading from the N-terminus, the 459-residue chain is Cyclooctat-9-en-7-ol 5-monooxygenase (459 aa).

Residues 1–27 (MRERGPVTPAKSSAPPERPWTTGTAPG) are disordered. Residue C408 participates in heme binding.

It belongs to the cytochrome P450 family. Heme is required as a cofactor.

The enzyme catalyses cyclooctat-9-en-7-ol + AH2 + O2 = cyclooctat-9-ene-5,7-diol + A + H2O. Functionally, involved in the biosynthesis of cyclooctatin, a potent inhibitor of lysophospholipase. Catalyzes the stereospecific hydroxylation of cyclooctat-9-en-7-ol to form cyclooctat-9-ene-5,7-diol. The chain is Cyclooctat-9-en-7-ol 5-monooxygenase from Streptomyces melanosporofaciens.